A 338-amino-acid polypeptide reads, in one-letter code: Biotin synthase (338 aa).

Residues 63–290 (NGVQLSTLLS…RAKVRLSAGR (228 aa)) enclose the Radical SAM core domain. Residues Cys78, Cys82, and Cys85 each contribute to the [4Fe-4S] cluster site. 4 residues coordinate [2Fe-2S] cluster: Cys122, Cys153, Cys213, and Arg285.

The protein belongs to the radical SAM superfamily. Biotin synthase family. As to quaternary structure, homodimer. The cofactor is [4Fe-4S] cluster. Requires [2Fe-2S] cluster as cofactor.

It carries out the reaction (4R,5S)-dethiobiotin + (sulfur carrier)-SH + 2 reduced [2Fe-2S]-[ferredoxin] + 2 S-adenosyl-L-methionine = (sulfur carrier)-H + biotin + 2 5'-deoxyadenosine + 2 L-methionine + 2 oxidized [2Fe-2S]-[ferredoxin]. Its pathway is cofactor biosynthesis; biotin biosynthesis; biotin from 7,8-diaminononanoate: step 2/2. Functionally, catalyzes the conversion of dethiobiotin (DTB) to biotin by the insertion of a sulfur atom into dethiobiotin via a radical-based mechanism. The protein is Biotin synthase of Nitrosomonas eutropha (strain DSM 101675 / C91 / Nm57).